A 395-amino-acid polypeptide reads, in one-letter code: Flap endonuclease 1 (395 aa).

Residues 1-104 (MGIKHLYQII…GELAKRFMRK (104 aa)) are N-domain. Residue Asp-34 coordinates Mg(2+). The DNA site is built by Arg-47 and Arg-70. The Mg(2+) site is built by Asp-86, Glu-158, Glu-160, Asp-179, and Asp-181. Positions 122 to 253 (EVEKFSRRTV…NTALKLIRDH (132 aa)) are I-domain. Position 158 (Glu-158) interacts with DNA. Positions 231 and 233 each coordinate DNA. A Mg(2+)-binding site is contributed by Asp-233. The interval 341–349 (QQSRLEGFF) is interaction with PCNA. Residues 360–389 (AVLKRKHEEKLELQKKKKKEDAKAKKEAKS) show a composition bias toward basic and acidic residues. Residues 360-395 (AVLKRKHEEKLELQKKKKKEDAKAKKEAKSKPRGTT) form a disordered region.

It belongs to the XPG/RAD2 endonuclease family. FEN1 subfamily. In terms of assembly, interacts with PCNA. Three molecules of FEN1 bind to one PCNA trimer with each molecule binding to one PCNA monomer. PCNA stimulates the nuclease activity without altering cleavage specificity. Requires Mg(2+) as cofactor. In terms of processing, phosphorylated. Phosphorylation upon DNA damage induces relocalization to the nuclear plasma.

It localises to the nucleus. The protein localises to the nucleolus. It is found in the nucleoplasm. The protein resides in the mitochondrion. Functionally, structure-specific nuclease with 5'-flap endonuclease and 5'-3' exonuclease activities involved in DNA replication and repair. During DNA replication, cleaves the 5'-overhanging flap structure that is generated by displacement synthesis when DNA polymerase encounters the 5'-end of a downstream Okazaki fragment. It enters the flap from the 5'-end and then tracks to cleave the flap base, leaving a nick for ligation. Also involved in the long patch base excision repair (LP-BER) pathway, by cleaving within the apurinic/apyrimidinic (AP) site-terminated flap. Acts as a genome stabilization factor that prevents flaps from equilibrating into structures that lead to duplications and deletions. Also possesses 5'-3' exonuclease activity on nicked or gapped double-stranded DNA, and exhibits RNase H activity. Also involved in replication and repair of rDNA and in repairing mitochondrial DNA. The sequence is that of Flap endonuclease 1 from Ajellomyces capsulatus (strain NAm1 / WU24) (Darling's disease fungus).